The following is a 1056-amino-acid chain: MARNSNSDEAFSSEEEEERVKDNEEEDEEELEAVARSSGSDDDEVAAADESPVSDGEAAPVEDDYEDEEDEEKAEISKREKARLKEMQKLKKQKIQEMLESQNASIDADMNNKGKGRLKYLLQQTELFAHFAKSDGSSSQKKAKGRGRHASKITEEEEDEEYLKEEEDGLTGSGNTRLLTQPSCIQGKMRDYQLAGLNWLIRLYENGINGILADEMGLGKTLQTISLLAYLHEYRGINGPHMVVAPKSTLGNWMNEIRRFCPVLRAVKFLGNPEERRHIREDLLVAGKFDICVTSFEMAIKEKTALRRFSWRYIIIDEAHRIKNENSLLSKTMRLFSTNYRLLITGTPLQNNLHELWALLNFLLPEIFSSAETFDEWFQISGENDQQEVVQQLHKVLRPFLLRRLKSDVEKGLPPKKETILKVGMSQMQKQYYKALLQKDLEAVNAGGERKRLLNIAMQLRKCCNHPYLFQGAEPGPPYTTGDHLITNAGKMVLLDKLLPKLKERDSRVLIFSQMTRLLDILEDYLMYRGYLYCRIDGNTGGDERDASIEAYNKPGSEKFVFLLSTRAGGLGINLATADVVILYDSDWNPQVDLQAQDRAHRIGQKKEVQVFRFCTESAIEEKVIERAYKKLALDALVIQQGRLAEQKTVNKDELLQMVRYGAEMVFSSKDSTITDEDIDRIIAKGEEATAELDAKMKKFTEDAIQFKMDDSADFYDFDDDNKDENKLDFKKIVSDNWNDPPKRERKRNYSESEYFKQTLRQGAPAKPKEPRIPRMPQLHDFQFFNIQRLTELYEKEVRYLMQTHQKNQLKDTIDVEEPEEGGDPLTTEEVEEKEGLLEEGFSTWSRRDFNTFLRACEKYGRNDIKSIASEMEGKTEEEVERYAKVFKERYKELNDYDRIIKNIERGEARISRKDEIMKAIGKKLDRYRNPWLELKIQYGQNKGKLYNEECDRFMICMIHKLGYGNWDELKAAFRTSSVFRFDWFVKSRTSQELARRCDTLIRLIEKENQEFDERERQARKEKKLAKSATPSKRPLGRQASESPSSTKKRKHLSMR.

The segment covering 1–10 has biased composition (low complexity); sequence MARNSNSDEA. Disordered stretches follow at residues 1 to 80 and 133 to 175; these read MARN…SKRE and KSDG…GSGN. Acidic residues-rich tracts occupy residues 11–32 and 60–73; these read FSSE…EELE and PVED…DEEK. Positions 12–105 form a coiled coil; sequence SSEEEEERVK…QEMLESQNAS (94 aa). The segment covering 141 to 151 has biased composition (basic residues); sequence KKAKGRGRHAS. The segment covering 155–169 has biased composition (acidic residues); sequence EEEEDEEYLKEEEDG. One can recognise a Helicase ATP-binding domain in the interval 201–366; sequence IRLYENGING…WALLNFLLPE (166 aa). 214 to 221 provides a ligand contact to ATP; it reads DEMGLGKT. The DEAH box signature appears at 317-320; it reads DEAH. One can recognise a Helicase C-terminal domain in the interval 494 to 645; sequence LLDKLLPKLK…ALVIQQGRLA (152 aa). Disordered stretches follow at residues 738–774 and 814–833; these read WNDP…PRIP and IDVE…EVEE. A compositionally biased stretch (acidic residues) spans 815 to 833; that stretch reads DVEEPEEGGDPLTTEEVEE. 2 consecutive SANT domains span residues 840–892 and 941–1002; these read EGFS…ERYK and QNKG…DTLI. A disordered region spans residues 1011-1056; it reads EFDERERQARKEKKLAKSATPSKRPLGRQASESPSSTKKRKHLSMR. A compositionally biased stretch (basic residues) spans 1047–1056; that stretch reads TKKRKHLSMR.

This sequence belongs to the SNF2/RAD54 helicase family. ISWI subfamily. In terms of assembly, interacts with RLT1 and RLT2. Interacts (via C-terminus) with RLT1 (via the DDT domain), RLT2 (via the DDT domain), PTM (via the DDT domain) and DDR4 (via the DDT domain). Binds to FGT1. As to expression, highly expressed in growing tissues such as inflorescence and flower meristems, young leaves and floral organs. Expressed in roots, rosette and cauline leaves, stems, flowers, inflorescences and siliques.

Its subcellular location is the nucleus. In terms of biological role, possesses intrinsic ATP-dependent nucleosome-remodeling activity. Constitutes the catalytic subunit of several complexes capable of forming ordered nucleosome arrays on chromatin. Involved in the formation of nucleosome distribution patterns. Involved in nuclear proliferation during megagametogenesis and cell expansion in the sporophyte. Required for the maintenance of the plant vegetative phase. In association with RLT1 or RLT2 may prevent the early activation of the vegetative-to-reproductive transition by regulating key genes that contribute to flower timing, such as FT, SEP1, SEP3, AGL8/FUL, SOC1 and FLC. Necessary to acquire heat stress (HS) memory. The polypeptide is ISWI chromatin-remodeling complex ATPase CHR11 (Arabidopsis thaliana (Mouse-ear cress)).